A 201-amino-acid chain; its full sequence is Osmotically-inducible protein Y (201 aa).

The first 28 residues, 1–28 (MTMTRLKISKTLLAVMLTSAVATGSAYA), serve as a signal peptide directing secretion. BON domains are found at residues 55–123 (DDSA…HVRD) and 134–201 (GDTA…LKTK).

The protein localises to the periplasm. The polypeptide is Osmotically-inducible protein Y (osmY) (Escherichia coli (strain K12)).